Here is a 381-residue protein sequence, read N- to C-terminus: Chymosin (381 aa).

Positions 1 to 16 are cleaved as a signal peptide; that stretch reads MRCLVVLLAVFALSQG. Positions 17–58 are cleaved as a propeptide — activation peptide; that stretch reads AEITRIPLYKGKSLRKALKEHGLLEDFLQKQQYGISSKYSGF. The Peptidase A1 domain occupies 74-378; that stretch reads YFGKIYLGTP…DRANNLVGLA (305 aa). Aspartate 92 is a catalytic residue. Disulfide bonds link cysteine 105–cysteine 110 and cysteine 265–cysteine 269. Aspartate 274 is an active-site residue. An intrachain disulfide couples cysteine 308 to cysteine 341.

It belongs to the peptidase A1 family. As to quaternary structure, monomer.

It carries out the reaction Broad specificity similar to that of pepsin A. Clots milk by cleavage of a single 104-Ser-Phe-|-Met-Ala-107 bond in kappa-chain of casein.. Functionally, chymosin is synthesized in the mucosa of the abomasum (fourth stomach) of young (unweaned) ruminants. The enzyme hydrolyzes casein to paracasein. The protein is Chymosin (CYM) of Bos taurus (Bovine).